Consider the following 276-residue polypeptide: Omega-amidase NIT2 (276 aa).

Residues 4 to 248 (FRLALIQLQI…EAIVYSDIDL (245 aa)) enclose the CN hydrolase domain. Serine 26 bears the Phosphoserine mark. Residue glutamate 43 is the Proton acceptor of the active site. Lysine 68 carries the N6-acetyllysine; alternate modification. Lysine 68 carries the N6-succinyllysine; alternate modification. The active-site Proton donor is lysine 112. N6-succinyllysine is present on residues lysine 123 and lysine 130. The Nucleophile role is filled by cysteine 153.

As to quaternary structure, homodimer. In terms of tissue distribution, detected in fetal brain (at protein level). Ubiquitous. Detected in heart, brain, placenta, lung, liver, skeletal muscle, kidney, pancreas, prostate, spleen, thymus, prostate, testis, ovary, small intestine and colon.

Its subcellular location is the cytoplasm. It carries out the reaction a monoamide of a dicarboxylate + H2O = a dicarboxylate + NH4(+). The catalysed reaction is 2-oxoglutaramate + H2O = 2-oxoglutarate + NH4(+). It catalyses the reaction 2-oxosuccinamate + H2O = oxaloacetate + NH4(+). In terms of biological role, has omega-amidase activity. The role of omega-amidase is to remove potentially toxic intermediates by converting 2-oxoglutaramate and 2-oxosuccinamate to biologically useful 2-oxoglutarate and oxaloacetate, respectively. The polypeptide is Omega-amidase NIT2 (NIT2) (Homo sapiens (Human)).